The primary structure comprises 144 residues: 3-dehydroquinate dehydratase (144 aa).

The active-site Proton acceptor is Y24. Substrate-binding residues include N73, H79, and D86. The Proton donor role is filled by H99. Substrate is bound by residues 100–101 (LS) and R110.

The protein belongs to the type-II 3-dehydroquinase family. As to quaternary structure, homododecamer.

The enzyme catalyses 3-dehydroquinate = 3-dehydroshikimate + H2O. It participates in metabolic intermediate biosynthesis; chorismate biosynthesis; chorismate from D-erythrose 4-phosphate and phosphoenolpyruvate: step 3/7. Catalyzes a trans-dehydration via an enolate intermediate. The protein is 3-dehydroquinate dehydratase of Shewanella sp. (strain ANA-3).